The chain runs to 318 residues: Cobalamin biosynthesis protein CobD (318 aa).

5 consecutive transmembrane segments (helical) span residues 56–76 (VLWLLVVGITWLVSWGFLWLM), 78–98 (EINPWLGWLAQVWMIYTLLAG), 153–173 (VDGVIAPLFFLMLGGAPLAMA), 204–224 (LANWLPARLSWVLLSAAAWLI), and 298–318 (MMASLLALLLFALTHLLLVGI).

Belongs to the CobD/CbiB family.

The protein resides in the cell membrane. It functions in the pathway cofactor biosynthesis; adenosylcobalamin biosynthesis. Its function is as follows. Converts cobyric acid to cobinamide by the addition of aminopropanol on the F carboxylic group. In Yersinia enterocolitica serotype O:8 / biotype 1B (strain NCTC 13174 / 8081), this protein is Cobalamin biosynthesis protein CobD.